The primary structure comprises 274 residues: NH(3)-dependent NAD(+) synthetase (274 aa).

46–53 is a binding site for ATP; sequence GISGGQDS. D52 provides a ligand contact to Mg(2+). R140 lines the deamido-NAD(+) pocket. Residue T160 coordinates ATP. Residue E165 coordinates Mg(2+). K173 and D180 together coordinate deamido-NAD(+). K189 and T211 together coordinate ATP. 260 to 261 serves as a coordination point for deamido-NAD(+); it reads HK.

It belongs to the NAD synthetase family. As to quaternary structure, homodimer.

It catalyses the reaction deamido-NAD(+) + NH4(+) + ATP = AMP + diphosphate + NAD(+) + H(+). Its pathway is cofactor biosynthesis; NAD(+) biosynthesis; NAD(+) from deamido-NAD(+) (ammonia route): step 1/1. Its function is as follows. Catalyzes the ATP-dependent amidation of deamido-NAD to form NAD. Uses ammonia as a nitrogen source. The polypeptide is NH(3)-dependent NAD(+) synthetase (Listeria monocytogenes serotype 4b (strain CLIP80459)).